Here is a 57-residue protein sequence, read N- to C-terminus: UPF0509 protein YciZ (57 aa).

Belongs to the UPF0509 family.

The protein is UPF0509 protein YciZ (yciZ) of Escherichia coli O157:H7.